The following is a 136-amino-acid chain: Ig heavy chain V region XIG8 (136 aa).

An N-terminal signal peptide occupies residues 1–18; the sequence is GFGIFVIFMFFSPSCILS. Residues 19–128 form the Ig-like domain; the sequence is QTLQESGPGT…TAGYFEHWGQ (110 aa).

This is Ig heavy chain V region XIG8 from Xenopus laevis (African clawed frog).